A 1331-amino-acid chain; its full sequence is Contactin-associated protein-like 2 (1331 aa).

Residues 1-27 form the signal peptide; it reads MQAAPRAGCGAALLLWIVSSCLCRAWT. Topologically, residues 28 to 1262 are extracellular; that stretch reads APSTSQKCDE…IRNGVNRNSA (1235 aa). An F5/8 type C domain is found at 35–181; the sequence is CDEPLVSGLP…IGLRIEVYGC (147 aa). Residues C35 and C181 are joined by a disulfide bond. The 153-residue stretch at 216 to 368 folds into the Laminin G-like 1 domain; sequence FKTSESEGVI…SNVGNLSFSC (153 aa). N-linked (GlcNAc...) asparagine glycosylation is found at N289, N346, N363, N379, N436, N506, N507, and N546. C336 and C368 are disulfide-bonded. One can recognise a Laminin G-like 2 domain in the interval 401 to 552; the sequence is FRTWNPNGLL…SFANVSIDMC (152 aa). Disulfide bonds link C520–C552, C558–C569, C563–C578, and C580–C590. In terms of domain architecture, EGF-like 1 spans 554–591; the sequence is IIDRCVPNHCEHGGKCSQTWDSFKCTCDETGYSGATCH. The 207-residue stretch at 592-798 folds into the Fibrinogen C-terminal domain; the sequence is NSIYEPSCEA…LRCQGDRNYW (207 aa). 2 N-linked (GlcNAc...) asparagine glycosylation sites follow: N630 and N735. The 165-residue stretch at 799–963 folds into the Laminin G-like 3 domain; sequence NAASFPNPSS…KVTSGFISGC (165 aa). Cystine bridges form between C936–C963, C967–C980, C974–C989, and C991–C1001. The 40-residue stretch at 963 to 1002 folds into the EGF-like 2 domain; it reads CSGHCTSYGTNCENGGKCLERYHGYSCDCSNTAYDGTFCN. The disordered stretch occupies residues 1026-1045; the sequence is ARDSSSRVDNAPDQQNSHPD. In terms of domain architecture, Laminin G-like 4 spans 1055–1214; the sequence is FSTTKAPCIL…IQGELVESNC (160 aa). N1116 and N1198 each carry an N-linked (GlcNAc...) asparagine glycan. C1178 and C1214 are oxidised to a cystine. The chain crosses the membrane as a helical span at residues 1263–1283; the sequence is IIGGVIAVVIFTILCTLVFLI. Over 1284–1331 the chain is Cytoplasmic; that stretch reads RYMFRHKGTYHTNEAKGAESAESADAAIMNNDPNFTETIDESKKEWLI. Phosphoserine is present on residues S1303 and S1306.

Belongs to the neurexin family. Interacts (via C-terminus) with KCNA2. Interacts with GPR37. In terms of tissue distribution, predominantly expressed in nervous system.

It is found in the membrane. The protein localises to the cell projection. It localises to the axon. The protein resides in the cell junction. Its subcellular location is the paranodal septate junction. Required for gap junction formation. Required, with CNTNAP1, for radial and longitudinal organization of myelinated axons. Plays a role in the formation of functional distinct domains critical for saltatory conduction of nerve impulses in myelinated nerve fibers. Demarcates the juxtaparanodal region of the axo-glial junction. The protein is Contactin-associated protein-like 2 (CNTNAP2) of Homo sapiens (Human).